A 962-amino-acid polypeptide reads, in one-letter code: Protein suppressor of underreplication (962 aa).

5 disordered regions span residues 353 to 413 (EIVT…TRAA), 438 to 590 (TPTP…LSGS), 658 to 712 (NSSH…SPDL), 866 to 900 (QERTQPSNGNRNSIVASLRKSPKSPKHGARTTQAT), and 916 to 962 (QTSS…ELFK). Over residues 372-382 (PRTKSKKKCSK) the composition is skewed to basic residues. A compositionally biased stretch (basic and acidic residues) spans 386-395 (PCKEADLTDS). Composition is skewed to polar residues over residues 438–448 (TPTPSGATTAI) and 480–489 (LTRSAESKIN). Over residues 524-552 (VKQESKAKAKPEQKKKIKTVDKPAQETPK) the composition is skewed to basic and acidic residues. The span at 553-562 (RKPGRPRKCK) shows a compositional bias: basic residues. A compositionally biased stretch (polar residues) spans 564-576 (LTETLGKSKTKPN). The segment covering 673 to 683 (RRTKALKRKRK) has biased composition (basic residues). 2 stretches are compositionally biased toward polar residues: residues 703–712 (RSATNKSPDL) and 866–880 (QERTQPSNGNRNSIV). The span at 885–894 (KSPKSPKHGA) shows a compositional bias: basic residues. Residues 916-944 (QTSSVESVSAPSTPVNPSTSAAACQTRTA) are compositionally biased toward polar residues. The span at 953–962 (TKRKRLELFK) shows a compositional bias: basic residues.

The protein localises to the nucleus. It is found in the chromosome. Required for underreplication of DNA, which is found in many late replicating euchromatic regions of salivary gland polytene chromosomes. Controls chromatin organization in polytene chromosomes. This chain is Protein suppressor of underreplication (SuUR), found in Drosophila erecta (Fruit fly).